The chain runs to 222 residues: Probable GTP-binding protein EngB (222 aa).

An EngB-type G domain is found at A25–T199. GTP-binding positions include G33–S40, G60–H64, D78–G81, T145–D148, and F178–S180. Positions 40 and 62 each coordinate Mg(2+).

This sequence belongs to the TRAFAC class TrmE-Era-EngA-EngB-Septin-like GTPase superfamily. EngB GTPase family. Mg(2+) is required as a cofactor.

Necessary for normal cell division and for the maintenance of normal septation. This Nitrosomonas europaea (strain ATCC 19718 / CIP 103999 / KCTC 2705 / NBRC 14298) protein is Probable GTP-binding protein EngB.